An 876-amino-acid chain; its full sequence is Alanine--tRNA ligase (876 aa).

His564, His568, Cys666, and His670 together coordinate Zn(2+).

The protein belongs to the class-II aminoacyl-tRNA synthetase family. In terms of assembly, homotetramer. Requires Zn(2+) as cofactor.

The protein localises to the cytoplasm. It catalyses the reaction tRNA(Ala) + L-alanine + ATP = L-alanyl-tRNA(Ala) + AMP + diphosphate. Functionally, catalyzes the attachment of alanine to tRNA(Ala) in a two-step reaction: alanine is first activated by ATP to form Ala-AMP and then transferred to the acceptor end of tRNA(Ala). Also edits incorrectly charged Ser-tRNA(Ala) and Gly-tRNA(Ala) via its editing domain. This chain is Alanine--tRNA ligase, found in Salmonella choleraesuis (strain SC-B67).